A 217-amino-acid chain; its full sequence is Chorionic somatomammotropin hormone 1 (217 aa).

An N-terminal signal peptide occupies residues 1 to 26 (MAPGSRTSLLLAFALLCLPWLQEAGA). Residue H44 coordinates Zn(2+). The cysteines at positions 79 and 191 are disulfide-linked. E200 contributes to the Zn(2+) binding site. Residues C208 and C215 are joined by a disulfide bond.

This sequence belongs to the somatotropin/prolactin family. In terms of assembly, can be found in a monomeric as well as dimeric form.

Its subcellular location is the secreted. Its function is as follows. Produced only during pregnancy and is involved in stimulating lactation, fetal growth and metabolism. Does not interact with GHR but only activates PRLR through zinc-induced dimerization. In Homo sapiens (Human), this protein is Chorionic somatomammotropin hormone 1 (CSH1).